The following is a 257-amino-acid chain: Lysine-rich coiled-coil protein 1 (257 aa).

The interval 145–257 (NTSAHQASYK…MLWDQSILGF (113 aa)) is disordered. The span at 152 to 162 (SYKHIHQKRKR) shows a compositional bias: basic residues. Basic and acidic residues-rich tracts occupy residues 163–176 (HTEE…EERP), 183–193 (ACEEIDLDKYK), 200–212 (TEAE…TEKL), and 219–228 (RSRDVASKKE). Residues 210–248 (EKLKNRKEKRSRDVASKKEERKRRKEKKEQGQERTEEEM) adopt a coiled-coil conformation.

The chain is Lysine-rich coiled-coil protein 1 (KRCC1) from Bos taurus (Bovine).